The following is an 847-amino-acid chain: Leucine--tRNA ligase (847 aa).

The 'HIGH' region motif lies at 41 to 51; sequence PYPSGRIHMGH. Positions 619 to 623 match the 'KMSKS' region motif; the sequence is KMSKS. Lysine 622 serves as a coordination point for ATP.

This sequence belongs to the class-I aminoacyl-tRNA synthetase family.

Its subcellular location is the cytoplasm. It catalyses the reaction tRNA(Leu) + L-leucine + ATP = L-leucyl-tRNA(Leu) + AMP + diphosphate. This chain is Leucine--tRNA ligase, found in Cereibacter sphaeroides (strain ATCC 17029 / ATH 2.4.9) (Rhodobacter sphaeroides).